A 143-amino-acid chain; its full sequence is Small ribosomal subunit protein bS18 (143 aa).

The interval 1–72 (MARPDMGGPK…RGGEEGGRRG (72 aa)) is disordered. Residues 10–50 (KSSGGFGGPRSGGGFGGGGYGGGGGGGGGYGGGGGGGFGGR) are compositionally biased toward gly residues. Positions 51-70 (GGDRGDRGDRDDRGGEEGGR) are enriched in basic and acidic residues.

It belongs to the bacterial ribosomal protein bS18 family. As to quaternary structure, part of the 30S ribosomal subunit. Forms a tight heterodimer with protein bS6.

In terms of biological role, binds as a heterodimer with protein bS6 to the central domain of the 16S rRNA, where it helps stabilize the platform of the 30S subunit. This Anaeromyxobacter sp. (strain Fw109-5) protein is Small ribosomal subunit protein bS18.